Reading from the N-terminus, the 119-residue chain is Protein phosphatase EYA3 (119 aa).

The protein belongs to the HAD-like hydrolase superfamily. EYA family. Mg(2+) is required as a cofactor.

It localises to the cytoplasm. The protein localises to the nucleus. It catalyses the reaction O-phospho-L-tyrosyl-[protein] + H2O = L-tyrosyl-[protein] + phosphate. Tyrosine phosphatase that specifically dephosphorylates 'Tyr-142' of histone H2AX (H2AXY142ph). 'Tyr-142' phosphorylation of histone H2AX plays a central role in DNA repair and acts as a mark that distinguishes between apoptotic and repair responses to genotoxic stress. Promotes efficient DNA repair by dephosphorylating H2AX, promoting the recruitment of DNA repair complexes containing MDC1. Its function as histone phosphatase probably explains its role in transcription regulation during organogenesis. May be involved in development of the eye. The chain is Protein phosphatase EYA3 (EYA3) from Gallus gallus (Chicken).